The sequence spans 619 residues: Dihydroxy-acid dehydratase (619 aa).

Residue aspartate 81 participates in Mg(2+) binding. Cysteine 122 provides a ligand contact to [2Fe-2S] cluster. Aspartate 123 and lysine 124 together coordinate Mg(2+). Position 124 is an N6-carboxylysine (lysine 124). A [2Fe-2S] cluster-binding site is contributed by cysteine 201. Position 496 (glutamate 496) interacts with Mg(2+). The active-site Proton acceptor is serine 522.

The protein belongs to the IlvD/Edd family. Homodimer. [2Fe-2S] cluster serves as cofactor. Requires Mg(2+) as cofactor.

The enzyme catalyses (2R)-2,3-dihydroxy-3-methylbutanoate = 3-methyl-2-oxobutanoate + H2O. The catalysed reaction is (2R,3R)-2,3-dihydroxy-3-methylpentanoate = (S)-3-methyl-2-oxopentanoate + H2O. It participates in amino-acid biosynthesis; L-isoleucine biosynthesis; L-isoleucine from 2-oxobutanoate: step 3/4. It functions in the pathway amino-acid biosynthesis; L-valine biosynthesis; L-valine from pyruvate: step 3/4. Functions in the biosynthesis of branched-chain amino acids. Catalyzes the dehydration of (2R,3R)-2,3-dihydroxy-3-methylpentanoate (2,3-dihydroxy-3-methylvalerate) into 2-oxo-3-methylpentanoate (2-oxo-3-methylvalerate) and of (2R)-2,3-dihydroxy-3-methylbutanoate (2,3-dihydroxyisovalerate) into 2-oxo-3-methylbutanoate (2-oxoisovalerate), the penultimate precursor to L-isoleucine and L-valine, respectively. The chain is Dihydroxy-acid dehydratase from Burkholderia vietnamiensis (strain G4 / LMG 22486) (Burkholderia cepacia (strain R1808)).